We begin with the raw amino-acid sequence, 1388 residues long: Kinesin-like protein KIF15-A (1388 aa).

One can recognise a Kinesin motor domain in the interval 26–364 (AIKVFVRIRP…LQFAQRAKLI (339 aa)). An ATP-binding site is contributed by 110–117 (GQTGSGKT). The stretch at 369 to 1383 (VVNEDTQGNV…ENLFLKESKK (1015 aa)) forms a coiled coil. The disordered stretch occupies residues 1127–1156 (EQEKIRPASSNSSSPVVLPETPRTPEGNPY). Residues 1139–1388 (SSPVVLPETP…KESKKCEHCN (250 aa)) form a necessary for its targeting to microtubule minus ends region.

The protein belongs to the TRAFAC class myosin-kinesin ATPase superfamily. Kinesin family. KLP2 subfamily. As to quaternary structure, homodimer. Dimerization is required for targeting to microtubule minus ends. Found in a complex with tpx2 and microtubules. Its association with microtubules and targeting to microtubule minus ends requires tpx2. As to expression, strongly expressed in testis and weakly in lung (at protein level).

Its subcellular location is the cytoplasm. It is found in the cytoskeleton. It localises to the microtubule organizing center. The protein resides in the centrosome. The protein localises to the spindle. Its subcellular location is the spindle pole. Plus-end directed kinesin-like motor enzyme involved in mitotic spindle assembly. Required for centrosome separation and maintenance of spindle bipolarity during mitosis. This chain is Kinesin-like protein KIF15-A (kif15-a), found in Xenopus laevis (African clawed frog).